A 308-amino-acid polypeptide reads, in one-letter code: Ribosomal RNA large subunit methyltransferase F (308 aa).

Belongs to the methyltransferase superfamily. METTL16/RlmF family.

It localises to the cytoplasm. The enzyme catalyses adenosine(1618) in 23S rRNA + S-adenosyl-L-methionine = N(6)-methyladenosine(1618) in 23S rRNA + S-adenosyl-L-homocysteine + H(+). Its function is as follows. Specifically methylates the adenine in position 1618 of 23S rRNA. This Escherichia coli (strain SMS-3-5 / SECEC) protein is Ribosomal RNA large subunit methyltransferase F.